A 206-amino-acid polypeptide reads, in one-letter code: Large ribosomal subunit protein uL4 (206 aa).

Belongs to the universal ribosomal protein uL4 family. Part of the 50S ribosomal subunit.

In terms of biological role, one of the primary rRNA binding proteins, this protein initially binds near the 5'-end of the 23S rRNA. It is important during the early stages of 50S assembly. It makes multiple contacts with different domains of the 23S rRNA in the assembled 50S subunit and ribosome. Its function is as follows. Forms part of the polypeptide exit tunnel. The chain is Large ribosomal subunit protein uL4 from Methylorubrum populi (strain ATCC BAA-705 / NCIMB 13946 / BJ001) (Methylobacterium populi).